A 461-amino-acid polypeptide reads, in one-letter code: Ribonuclease inhibitor (461 aa).

At serine 2 the chain carries N-acetylserine. The 2 X 5 AA tandem repeats of S-L-D-I-Q stretch occupies residues 2-11; sequence SLDIQSLDIQ. LRR repeat units follow at residues 20-48, 49-76, 77-105, 106-133, 134-162, 163-190, 191-219, 220-247, 248-276, 277-304, 305-333, 334-361, 362-390, 391-418, and 419-447; these read WAEL…CKDI, SSAL…VHCV, LQGL…CGVL, SSTL…LQLL, CEGL…CKPL, ASVL…VRVL, CQGL…CRDL, CGIV…MAEL, CPGL…CGDL, CRVL…ARLL, CETL…CSHF, SSVL…VQEL, CQGL…CSSL, AATL…ILQL, and VESV…EDRL. Position 91 is a phosphoserine (serine 91).

Forms high-affinity heterodimers with RNASE1, ANG and RNASE2.

The protein resides in the cytoplasm. The protein localises to the nucleus. Ribonuclease inhibitor which inhibits RNASE1, RNASE2 and angiogenin (ANG). May play a role in redox homeostasis. Required to inhibit the cytotoxic tRNA ribonuclease activity of ANG in the cytoplasm in absence of stress. Relocates to the nucleus in response to stress, relieving inhibition of ANG in the cytoplasm, and inhibiting the angiogenic activity of ANG in the nucleus. This chain is Ribonuclease inhibitor (RNH1), found in Pan troglodytes (Chimpanzee).